Here is a 560-residue protein sequence, read N- to C-terminus: Membrane protein insertase YidC (560 aa).

6 consecutive transmembrane segments (helical) span residues isoleucine 5–phenylalanine 25, alanine 334–phenylalanine 354, tyrosine 357–phenylalanine 377, leucine 431–isoleucine 451, leucine 476–leucine 496, and phenylalanine 522–tryptophan 542.

This sequence belongs to the OXA1/ALB3/YidC family. Type 1 subfamily. Interacts with the Sec translocase complex via SecD. Specifically interacts with transmembrane segments of nascent integral membrane proteins during membrane integration.

The protein localises to the cell inner membrane. Functionally, required for the insertion and/or proper folding and/or complex formation of integral membrane proteins into the membrane. Involved in integration of membrane proteins that insert both dependently and independently of the Sec translocase complex, as well as at least some lipoproteins. Aids folding of multispanning membrane proteins. The protein is Membrane protein insertase YidC of Rickettsia akari (strain Hartford).